The chain runs to 115 residues: Ribosome-binding factor A (115 aa).

This sequence belongs to the RbfA family. In terms of assembly, monomer. Binds 30S ribosomal subunits, but not 50S ribosomal subunits or 70S ribosomes.

Its subcellular location is the cytoplasm. Its function is as follows. One of several proteins that assist in the late maturation steps of the functional core of the 30S ribosomal subunit. Associates with free 30S ribosomal subunits (but not with 30S subunits that are part of 70S ribosomes or polysomes). Required for efficient processing of 16S rRNA. May interact with the 5'-terminal helix region of 16S rRNA. The chain is Ribosome-binding factor A from Staphylococcus carnosus (strain TM300).